The sequence spans 438 residues: Glutamate-1-semialdehyde 2,1-aminomutase (438 aa).

Lysine 278 carries the post-translational modification N6-(pyridoxal phosphate)lysine.

Belongs to the class-III pyridoxal-phosphate-dependent aminotransferase family. HemL subfamily. Homodimer. Pyridoxal 5'-phosphate serves as cofactor.

It localises to the cytoplasm. It carries out the reaction (S)-4-amino-5-oxopentanoate = 5-aminolevulinate. The protein operates within porphyrin-containing compound metabolism; protoporphyrin-IX biosynthesis; 5-aminolevulinate from L-glutamyl-tRNA(Glu): step 2/2. This Delftia acidovorans (strain DSM 14801 / SPH-1) protein is Glutamate-1-semialdehyde 2,1-aminomutase.